The sequence spans 460 residues: Argininosuccinate lyase (460 aa).

Belongs to the lyase 1 family. Argininosuccinate lyase subfamily.

The protein resides in the cytoplasm. The enzyme catalyses 2-(N(omega)-L-arginino)succinate = fumarate + L-arginine. Its pathway is amino-acid biosynthesis; L-arginine biosynthesis; L-arginine from L-ornithine and carbamoyl phosphate: step 3/3. This Rhodopirellula baltica (strain DSM 10527 / NCIMB 13988 / SH1) protein is Argininosuccinate lyase.